Here is a 31-residue protein sequence, read N- to C-terminus: U14-ctenitoxin-Co1a (31 aa).

Disulfide bonds are present. In terms of tissue distribution, expressed by the venom gland.

The protein localises to the secreted. In terms of biological role, omega-agatoxins are antagonists of voltage-gated calcium channels (Cav). The protein is U14-ctenitoxin-Co1a of Ctenus ornatus (Brazilian spider).